The following is a 131-amino-acid chain: NADH dehydrogenase [ubiquinone] 1 alpha subcomplex subunit 6 (131 aa).

This sequence belongs to the complex I LYR family. Mammalian complex I is composed of 45 different subunits.

It localises to the mitochondrion inner membrane. Its function is as follows. Accessory subunit of the mitochondrial membrane respiratory chain NADH dehydrogenase (Complex I), that is believed to be not involved in catalysis. Required for proper complex I assembly. Complex I functions in the transfer of electrons from NADH to the respiratory chain. The immediate electron acceptor for the enzyme is believed to be ubiquinone. This is NADH dehydrogenase [ubiquinone] 1 alpha subcomplex subunit 6 from Mus musculus (Mouse).